The following is a 1052-amino-acid chain: Calmin (1052 aa).

Residues 1–288 (MAAQEWDWFQ…IVTYVAQFLE (288 aa)) form an actin-binding region. In terms of domain architecture, Calponin-homology (CH) 1 spans 32–139 (NVQKRTFTRW…LIWNIILFFQ (108 aa)). The span at 148 to 168 (SRSSPSSSLSPGSGGTDSDSS) shows a compositional bias: low complexity. The interval 148-178 (SRSSPSSSLSPGSGGTDSDSSYPPTPTTERS) is disordered. The Calponin-homology (CH) 2 domain occupies 187 to 291 (RKAIKTLLSW…YVAQFLERFP (105 aa)). Disordered stretches follow at residues 391–420 (STGK…SNSL), 455–545 (KATK…TLLA), 585–727 (STSQ…SPPL), and 758–929 (GEDL…DSSI). Composition is skewed to basic and acidic residues over residues 455–465 (KATKELSKQDG) and 472–495 (VSKE…DKVP). Positions 509–529 (AQPSQDSSFCNGTVESPSSQG) are enriched in polar residues. Ser-537 carries the phosphoserine modification. 3 stretches are compositionally biased toward basic and acidic residues: residues 594–614 (PSSH…AEKP), 622–651 (PRAE…EDQG), and 659–669 (PADKKPKVYEK). Residue Ser-679 is modified to Phosphoserine. Residue Thr-710 is modified to Phosphothreonine. The span at 711–720 (LRSHSEEGLD) shows a compositional bias: basic and acidic residues. Ser-724 is modified (phosphoserine). Residues 759–773 (EDLKSEDTDLEHPED) show a composition bias toward basic and acidic residues. Positions 780-791 (REEEADEDEEEA) are enriched in acidic residues. Positions 792 to 801 (QSSQSSCSFS) are enriched in low complexity. Residues 836–849 (SHEDHQPKETKENG) show a composition bias toward basic and acidic residues. A Phosphoserine modification is found at Ser-856. Residues 880–889 (SKKKEKRKHM) show a composition bias toward basic residues. Position 925 is a phosphoserine (Ser-925). A helical; Anchor for type IV membrane protein transmembrane segment spans residues 1027 to 1047 (VIYFILFLWLLVYCLLLFPQL).

In terms of tissue distribution, expressed in testis. Expressed during testis maturation process and in maturing spermatids. In brain, it is expressed in neurons of the hippocampus, cerebral cortex, and thalamus, Purkinje cells, and also in the choroid plexus and ependymal cells. Expressed predominantly in dendrites and cell bodies of the neurons, but not in axons. The level of expression increases during the period of maturation of the mouse brain after birth.

Its subcellular location is the membrane. It is found in the cytoplasm. This Mus musculus (Mouse) protein is Calmin (Clmn).